Here is a 332-residue protein sequence, read N- to C-terminus: Centrosomal AT-AC splicing factor (332 aa).

Residues 1–169 (MAPAQRCPLC…QSRQEVVRSV (169 aa)) are required for centrosome location. K31 is subject to N6-acetyllysine; by NAT10. Positions 137-168 (LDSYEEKEDKVIKEMAAQIREVEQSRQEVVRS) form a coiled coil. Positions 169–213 (VLEPQAVPDPEEGSSAPRSWKGMNSQVASSLQQPSNLDLPPAPEL) are disordered. Residues 190–204 (GMNSQVASSLQQPSN) are compositionally biased toward polar residues.

As to quaternary structure, interacts with SASS6; the interaction increases with CENATAC acetylation. In terms of processing, acetylated. Acetylation oscillates throughout the cell cycle, and the acetylation state at Lys-31 is regulated by the deacetylase SIRT1 and the acetyltransferase NAT10. Deacetylated CENATAC is responsible for its centrosome targeting, and acetylated CENATAC promotes SASS6 degradation by enhancing the binding affinity of SASS6 for APC/C E3 ubiquitin-protein ligase complex/FZR1.

It localises to the cytoplasm. It is found in the cytoskeleton. The protein resides in the microtubule organizing center. Its subcellular location is the centrosome. Functionally, component of the minor spliceosome that promotes splicing of a specific, rare minor intron subtype. Negative regulator of centrosome duplication. Constrains centriole number by modulating the degradation of the centrosome-duplication-associated protein SASS6 in an acetylation-dependent manner. SIRT1 deacetylates CENATAC in G1 phase, allowing for SASS6 accumulation on the centrosome and subsequent procentriole assembly. The CENATAC acetylation level is restored in mitosis by NAT10, promoting SASS6 proteasome degradation by facilitating SASS6 binding to APC/C E3 ubiquitin-protein ligase complex/FZR1. In Homo sapiens (Human), this protein is Centrosomal AT-AC splicing factor.